We begin with the raw amino-acid sequence, 466 residues long: Amino acid permease 4 (466 aa).

At 1-22 (MDVPRPAFKCFDDDGRLKRSGT) the chain is on the cytoplasmic side. 2 helical membrane passes run 23–43 (VWTA…LSLA) and 44–64 (WAIG…FSFV). Residues 65-111 (TYYSSTLLSDCYRTGDPVSGKRNYTYMDAVRSILGGFRFKICGLIQY) are Cytoplasmic-facing. Residues 112-132 (LNLFGITVGYTIAASISMMAI) form a helical membrane-spanning segment. Residues 133–177 (KRSNCFHESGGKNPCHMSSNPYMIMFGVTEILLSQIKDFDQIWWL) are Extracellular-facing. A helical membrane pass occupies residues 178-198 (SIVAAIMSFTYSAIGLALGII). Over 199 to 226 (QVAANGVVKGSLTGISIGAVTQTQKIWR) the chain is Cytoplasmic. A helical membrane pass occupies residues 227–247 (TFQALGDIAFAYSYSVVLIEI). Over 248–266 (QDTVRSPPAESKTMKIATR) the chain is Extracellular. Residues 267–287 (ISIAVTTTFYMLCGCMGYAAF) form a helical membrane-spanning segment. The Cytoplasmic segment spans residues 288–290 (GDK). The helical transmembrane segment at 291-311 (APGNLLTGFGFYNPFWLLDVA) threads the bilayer. The Extracellular segment spans residues 312-313 (NA). A helical membrane pass occupies residues 314 to 334 (AIVIHLVGAYQVFAQPIFAFI). At 335-369 (EKQAAARFPDSDLVTKEYEIRIPGFRSPYKVNVFR) the chain is on the cytoplasmic side. A helical membrane pass occupies residues 370 to 390 (AVYRSGFVVLTTVISMLMPFF). At 391–392 (ND) the chain is on the extracellular side. Residues 393–413 (VVGILGALGFWPLTVYFPVEM) traverse the membrane as a helical segment. At 414–435 (YIRQRKVERWSMKWVCLQMLSC) the chain is on the cytoplasmic side. Residues 436–456 (GCLMITLVAGVGSIAGVMLDL) traverse the membrane as a helical segment. The Extracellular segment spans residues 457 to 466 (KVYKPFKTTY).

This sequence belongs to the amino acid/polyamine transporter 2 family. Amino acid/auxin permease (AAAP) (TC 2.A.18.2) subfamily. As to expression, expressed in leaves, stems and flowers.

The protein localises to the cell membrane. Its activity is regulated as follows. Inhibited by 2,4-dinitrophenol. In terms of biological role, amino acid-proton symporter. Stereospecific transporter with a broad specificity for neutral amino acids, favoring small amino acids such as alanine, asparagine and glutamine. Also accepts large aromatic residues such as in phenlalanine or tyrosine. This Arabidopsis thaliana (Mouse-ear cress) protein is Amino acid permease 4 (AAP4).